The chain runs to 240 residues: MSSPSFRVAILANFILDDTGGRPMIDKITQLIRQSKPDAEINVYAAIEGDTLPDPETKDLIILTGGPFNLLKDERPKWVVDTLEYLKTVTAGPSKPKILGICWGQQAIALALGGALGKSDKGQIVGIADIPLTPEGTKFFESPSLTIHKNHEILVTDIGPHLLPLALNNEVLMSKDGQVLTFQGHPEMDSVLSRLFVASDNPVLVGAGSDSGLKPIDSPHDGEIIFERIVRWASPETAHS.

One can recognise a Glutamine amidotransferase type-1 domain in the interval 13-205 (NFILDDTGGR…FVASDNPVLV (193 aa)). The active-site Nucleophile is the Cys-102. Residues His-185 and Glu-187 contribute to the active site.

It belongs to the peptidase C26 family.

It functions in the pathway pigment biosynthesis. Its function is as follows. Glutamine amidotransferase-like protein; part of the gene cluster that mediates the biosynthesis of the yellow pigment chrysogine. Pyruvic acid and anthranilic acid are likely substrates for the nonribosomal peptide synthetase chry1/NRPS14, with pyruvic acid adenylated by the first A domain and anthranilic acid by the second. If pyruvic acid and anthranilic acid are merged and released from chry1/NRPS14 by hydrolysis, a subsequent amidation would lead to 2-pyruvoylaminobenzamide. This process is probably catalyzed by the amidotransferase chry2 using glutamine as amino donor. The dehydrogenase chry5 that has a terminal berberine bridge domain for C-N cyclization could catalyze the cyclization of 2-pyruvoylaminobenzamide to yield acetyl-4(3H)-quinazolidinone. A final reduction of acetyl-4(3H)-quinazolidinone catalyzed by the oxidoreductase chry4 would result in chrysogine. The polypeptide is Glutamine amidotransferase-like protein chry6 (Gibberella zeae (strain ATCC MYA-4620 / CBS 123657 / FGSC 9075 / NRRL 31084 / PH-1) (Wheat head blight fungus)).